The sequence spans 196 residues: uncharacterized protein (196 aa).

This is an uncharacterized protein from Mycoplasma genitalium (strain ATCC 33530 / DSM 19775 / NCTC 10195 / G37) (Mycoplasmoides genitalium).